We begin with the raw amino-acid sequence, 309 residues long: ATP synthase gamma chain (309 aa).

Belongs to the ATPase gamma chain family. As to quaternary structure, F-type ATPases have 2 components, CF(1) - the catalytic core - and CF(0) - the membrane proton channel. CF(1) has five subunits: alpha(3), beta(3), gamma(1), delta(1), epsilon(1). CF(0) has three main subunits: a, b and c.

The protein localises to the cell membrane. Functionally, produces ATP from ADP in the presence of a proton gradient across the membrane. The gamma chain is believed to be important in regulating ATPase activity and the flow of protons through the CF(0) complex. The chain is ATP synthase gamma chain from Salinispora arenicola (strain CNS-205).